Consider the following 512-residue polypeptide: Maturase K (512 aa).

The protein belongs to the intron maturase 2 family. MatK subfamily.

The protein resides in the plastid. It is found in the chloroplast. Usually encoded in the trnK tRNA gene intron. Probably assists in splicing its own and other chloroplast group II introns. This Lilium regale (Regal lily) protein is Maturase K.